The following is a 123-amino-acid chain: Small ribosomal subunit protein uS12c (123 aa).

The protein belongs to the universal ribosomal protein uS12 family. In terms of assembly, part of the 30S ribosomal subunit.

It is found in the plastid. The protein resides in the chloroplast. In terms of biological role, with S4 and S5 plays an important role in translational accuracy. Located at the interface of the 30S and 50S subunits. The chain is Small ribosomal subunit protein uS12c (rps12) from Anthoceros angustus (Hornwort).